A 664-amino-acid polypeptide reads, in one-letter code: Glycine--tRNA ligase beta subunit (664 aa).

Belongs to the class-II aminoacyl-tRNA synthetase family. Tetramer of two alpha and two beta subunits.

It is found in the cytoplasm. The enzyme catalyses tRNA(Gly) + glycine + ATP = glycyl-tRNA(Gly) + AMP + diphosphate. This is Glycine--tRNA ligase beta subunit from Rickettsia peacockii (strain Rustic).